Consider the following 598-residue polypeptide: Elongation factor 4 (598 aa).

A tr-type G domain is found at 4–186; the sequence is SHIRNFSIIA…VIVNKIPPPE (183 aa). Residues 16 to 21 and 133 to 136 each bind GTP; these read DHGKST and NKID.

This sequence belongs to the TRAFAC class translation factor GTPase superfamily. Classic translation factor GTPase family. LepA subfamily.

The protein localises to the cell inner membrane. The catalysed reaction is GTP + H2O = GDP + phosphate + H(+). In terms of biological role, required for accurate and efficient protein synthesis under certain stress conditions. May act as a fidelity factor of the translation reaction, by catalyzing a one-codon backward translocation of tRNAs on improperly translocated ribosomes. Back-translocation proceeds from a post-translocation (POST) complex to a pre-translocation (PRE) complex, thus giving elongation factor G a second chance to translocate the tRNAs correctly. Binds to ribosomes in a GTP-dependent manner. This Alteromonas mediterranea (strain DSM 17117 / CIP 110805 / LMG 28347 / Deep ecotype) protein is Elongation factor 4.